Consider the following 452-residue polypeptide: Metacaspase-1 (452 aa).

The segment at 1-97 (MYPGAGRPTY…GPPLQGRPRD (97 aa)) is disordered. A compositionally biased stretch (low complexity) spans 16-41 (QKGPYGQPQYQQQYAPPYPERYQQPY). Active-site residues include histidine 238 and cysteine 294.

It belongs to the peptidase C14B family.

Functionally, involved in cell death (apoptosis). The sequence is that of Metacaspase-1 (MCA1) from Eremothecium gossypii (strain ATCC 10895 / CBS 109.51 / FGSC 9923 / NRRL Y-1056) (Yeast).